The chain runs to 266 residues: Diphthine synthase (266 aa).

Residues L9, D85, I88, 113–114 (TA), L168, A210, and H235 contribute to the S-adenosyl-L-methionine site.

This sequence belongs to the diphthine synthase family. In terms of assembly, homodimer.

The catalysed reaction is 2-[(3S)-amino-3-carboxypropyl]-L-histidyl-[translation elongation factor 2] + 3 S-adenosyl-L-methionine = diphthine-[translation elongation factor 2] + 3 S-adenosyl-L-homocysteine + 3 H(+). The protein operates within protein modification; peptidyl-diphthamide biosynthesis. S-adenosyl-L-methionine-dependent methyltransferase that catalyzes the trimethylation of the amino group of the modified target histidine residue in translation elongation factor 2 (EF-2), to form an intermediate called diphthine. The three successive methylation reactions represent the second step of diphthamide biosynthesis. The protein is Diphthine synthase of Natronomonas pharaonis (strain ATCC 35678 / DSM 2160 / CIP 103997 / JCM 8858 / NBRC 14720 / NCIMB 2260 / Gabara) (Halobacterium pharaonis).